The primary structure comprises 431 residues: ETS domain-containing protein Elk-4 (431 aa).

The ETS DNA-binding region spans 5-85 (ITLWQFLLQL…NGQKFVYKFV (81 aa)). The tract at residues 114-139 (SSSSKDVENGGKDKPPQPGAKTSSRN) is disordered. Residues 118–128 (KDVENGGKDKP) are compositionally biased toward basic and acidic residues. Residue Lys-167 forms a Glycyl lysine isopeptide (Lys-Gly) (interchain with G-Cter in SUMO2) linkage. Ser-180 bears the Phosphoserine mark. Disordered regions lie at residues 251 to 282 (TTPP…DTDI), 294 to 323 (ENLS…KKPK), and 411 to 431 (TLSG…LQKT). The span at 261–273 (LQEPPRTPSPPLS) shows a compositional bias: pro residues. Basic and acidic residues predominate over residues 299–313 (EPKDQDSVLLEKDKV).

Belongs to the ETS family. In terms of assembly, interacts with SIRT7.

The protein localises to the nucleus. Its function is as follows. Involved in both transcriptional activation and repression. Interaction with SIRT7 leads to recruitment and stabilization of SIRT7 at promoters, followed by deacetylation of histone H3 at 'Lys-18' (H3K18Ac) and subsequent transcription repression. Forms a ternary complex with the serum response factor (SRF). Requires DNA-bound SRF for ternary complex formation and makes extensive DNA contacts to the 5'side of SRF, but does not bind DNA autonomously. The polypeptide is ETS domain-containing protein Elk-4 (ELK4) (Homo sapiens (Human)).